The chain runs to 217 residues: Probable transaldolase (217 aa).

K83 (schiff-base intermediate with substrate) is an active-site residue.

The protein belongs to the transaldolase family. Type 3B subfamily.

It localises to the cytoplasm. The catalysed reaction is D-sedoheptulose 7-phosphate + D-glyceraldehyde 3-phosphate = D-erythrose 4-phosphate + beta-D-fructose 6-phosphate. It participates in carbohydrate degradation; pentose phosphate pathway; D-glyceraldehyde 3-phosphate and beta-D-fructose 6-phosphate from D-ribose 5-phosphate and D-xylulose 5-phosphate (non-oxidative stage): step 2/3. In terms of biological role, transaldolase is important for the balance of metabolites in the pentose-phosphate pathway. The chain is Probable transaldolase from Brucella abortus (strain S19).